A 403-amino-acid polypeptide reads, in one-letter code: F-box/kelch-repeat protein At5g43190 (403 aa).

The F-box domain maps to 45–91 (PNIWSNLPNHLLEHILSLLPFKTLLTLRSISRHLRSLILSPSFISDH). 4 Kelch repeats span residues 91–140 (HSFS…LLSS), 192–240 (KIFT…VFYN), 291–339 (ILYM…VCYH), and 343–393 (HVYC…FRWF).

The chain is F-box/kelch-repeat protein At5g43190 from Arabidopsis thaliana (Mouse-ear cress).